The sequence spans 85 residues: CRISPR-associated endoribonuclease Cas2 (85 aa).

Aspartate 8 contributes to the Mg(2+) binding site.

The protein belongs to the CRISPR-associated endoribonuclease Cas2 protein family. In terms of assembly, homodimer, forms a heterotetramer with a Cas1 homodimer. Mg(2+) is required as a cofactor.

Its function is as follows. CRISPR (clustered regularly interspaced short palindromic repeat), is an adaptive immune system that provides protection against mobile genetic elements (viruses, transposable elements and conjugative plasmids). CRISPR clusters contain sequences complementary to antecedent mobile elements and target invading nucleic acids. CRISPR clusters are transcribed and processed into CRISPR RNA (crRNA). Functions as a ssRNA-specific endoribonuclease. Involved in the integration of spacer DNA into the CRISPR cassette. The chain is CRISPR-associated endoribonuclease Cas2 from Pyrococcus furiosus (strain ATCC 43587 / DSM 3638 / JCM 8422 / Vc1).